The primary structure comprises 126 residues: Glycine cleavage system H protein (126 aa).

A Lipoyl-binding domain is found at 22 to 104 (KLRIGITDFA…YEKAWMIVIE (83 aa)). Lys63 is subject to N6-lipoyllysine.

The protein belongs to the GcvH family. The glycine cleavage system is composed of four proteins: P, T, L and H. Requires (R)-lipoate as cofactor.

Its function is as follows. The glycine cleavage system catalyzes the degradation of glycine. The H protein shuttles the methylamine group of glycine from the P protein to the T protein. Is also involved in protein lipoylation via its role as an octanoyl/lipoyl carrier protein intermediate. In Oceanobacillus iheyensis (strain DSM 14371 / CIP 107618 / JCM 11309 / KCTC 3954 / HTE831), this protein is Glycine cleavage system H protein.